Consider the following 573-residue polypeptide: Putative inorganic phosphate transporter C1683.01 (573 aa).

Helical transmembrane passes span 48 to 68 (MMLA…INLV), 100 to 120 (AASN…GDFF), 124 to 144 (FVYG…IAMP), 154 to 174 (MMWV…DYPM), 194 to 214 (LIFA…IILL), and 230 to 250 (LEGV…GVLI). Residues 261 to 270 (FKNSQQLNSG) are compositionally biased toward polar residues. Disordered stretches follow at residues 261-280 (FKNS…TSLN) and 290-312 (PSVT…RSNT). 6 helical membrane-spanning segments follow: residues 348-368 (HLLG…GVNL), 397-417 (LIIA…LVEI), 422-442 (WIQL…AGRW), 451-471 (FACF…TTFI), 487-507 (GISA…FNFL), and 510-530 (IIGY…GILF).

The protein belongs to the major facilitator superfamily. Sugar transporter (TC 2.A.1.1) family.

Its subcellular location is the endoplasmic reticulum membrane. In terms of biological role, high-affinity transporter for external inorganic phosphate. This Schizosaccharomyces pombe (strain 972 / ATCC 24843) (Fission yeast) protein is Putative inorganic phosphate transporter C1683.01.